Here is a 155-residue protein sequence, read N- to C-terminus: Ribosome maturation factor RimP (155 aa).

It belongs to the RimP family.

Its subcellular location is the cytoplasm. Functionally, required for maturation of 30S ribosomal subunits. The chain is Ribosome maturation factor RimP from Bacteroides thetaiotaomicron (strain ATCC 29148 / DSM 2079 / JCM 5827 / CCUG 10774 / NCTC 10582 / VPI-5482 / E50).